The following is a 315-amino-acid chain: tRNA dimethylallyltransferase (315 aa).

14 to 21 (GPTASGKT) is a binding site for ATP. Residue 16 to 21 (TASGKT) coordinates substrate. Interaction with substrate tRNA stretches follow at residues 39-42 (DSAL), 163-167 (QRIQR), and 248-253 (RCVGYR).

This sequence belongs to the IPP transferase family. As to quaternary structure, monomer. Requires Mg(2+) as cofactor.

The enzyme catalyses adenosine(37) in tRNA + dimethylallyl diphosphate = N(6)-dimethylallyladenosine(37) in tRNA + diphosphate. In terms of biological role, catalyzes the transfer of a dimethylallyl group onto the adenine at position 37 in tRNAs that read codons beginning with uridine, leading to the formation of N6-(dimethylallyl)adenosine (i(6)A). This Paraburkholderia phytofirmans (strain DSM 17436 / LMG 22146 / PsJN) (Burkholderia phytofirmans) protein is tRNA dimethylallyltransferase.